A 416-amino-acid chain; its full sequence is Gamma-glutamyl phosphate reductase (416 aa).

This sequence belongs to the gamma-glutamyl phosphate reductase family.

It localises to the cytoplasm. It catalyses the reaction L-glutamate 5-semialdehyde + phosphate + NADP(+) = L-glutamyl 5-phosphate + NADPH + H(+). The protein operates within amino-acid biosynthesis; L-proline biosynthesis; L-glutamate 5-semialdehyde from L-glutamate: step 2/2. Functionally, catalyzes the NADPH-dependent reduction of L-glutamate 5-phosphate into L-glutamate 5-semialdehyde and phosphate. The product spontaneously undergoes cyclization to form 1-pyrroline-5-carboxylate. The polypeptide is Gamma-glutamyl phosphate reductase (Streptococcus thermophilus (strain CNRZ 1066)).